Reading from the N-terminus, the 78-residue chain is Large ribosomal subunit protein bL28 (78 aa).

The disordered stretch occupies residues Met-1–Arg-28.

Belongs to the bacterial ribosomal protein bL28 family.

This is Large ribosomal subunit protein bL28 from Cutibacterium acnes (strain DSM 16379 / KPA171202) (Propionibacterium acnes).